The sequence spans 166 residues: Small ribosomal subunit protein uS5 (166 aa).

One can recognise an S5 DRBM domain in the interval 11–74; the sequence is LREKLVAINR…EKARANMKRV (64 aa).

It belongs to the universal ribosomal protein uS5 family. In terms of assembly, part of the 30S ribosomal subunit. Contacts proteins S4 and S8.

Functionally, with S4 and S12 plays an important role in translational accuracy. Its function is as follows. Located at the back of the 30S subunit body where it stabilizes the conformation of the head with respect to the body. The protein is Small ribosomal subunit protein uS5 of Alkalilimnicola ehrlichii (strain ATCC BAA-1101 / DSM 17681 / MLHE-1).